The chain runs to 233 residues: 7-cyano-7-deazaguanine synthase (233 aa).

17–27 (LSGGLDSMVCA) provides a ligand contact to ATP. Zn(2+) contacts are provided by Cys-196, Cys-206, Cys-209, and Cys-212.

It belongs to the QueC family. Requires Zn(2+) as cofactor.

The enzyme catalyses 7-carboxy-7-deazaguanine + NH4(+) + ATP = 7-cyano-7-deazaguanine + ADP + phosphate + H2O + H(+). The protein operates within purine metabolism; 7-cyano-7-deazaguanine biosynthesis. Functionally, catalyzes the ATP-dependent conversion of 7-carboxy-7-deazaguanine (CDG) to 7-cyano-7-deazaguanine (preQ(0)). This is 7-cyano-7-deazaguanine synthase from Novosphingobium aromaticivorans (strain ATCC 700278 / DSM 12444 / CCUG 56034 / CIP 105152 / NBRC 16084 / F199).